The following is a 617-amino-acid chain: Probable LRR receptor-like serine/threonine-protein kinase RKF3 (617 aa).

Positions 1–20 (MLFLRRIAVVFFVFTSFSAA) are cleaved as a signal peptide. The Extracellular portion of the chain corresponds to 21 to 212 (QNSTCPLDFS…PTSSGANKVK (192 aa)). N-linked (GlcNAc...) asparagine glycosylation is found at asparagine 22, asparagine 124, asparagine 135, and asparagine 165. Residues 213–233 (VLVSSFSVLLVASVLVITAWF) traverse the membrane as a helical segment. Residues 234–617 (WYCRRKKSKL…DGPSGNTNTT (384 aa)) are Cytoplasmic-facing. One can recognise a Protein kinase domain in the interval 283-563 (FSRHNIIGRG…VKMLESNEFT (281 aa)). ATP-binding positions include 289 to 297 (IGRGGYGNV) and lysine 311. The active-site Proton acceptor is the aspartate 412. The disordered stretch occupies residues 585–617 (VSSSSGSGKLTSPTGYQAFSFGGDGPSGNTNTT).

The protein belongs to the protein kinase superfamily. Ser/Thr protein kinase family. In terms of tissue distribution, expressed in the whole plant at low levels.

Its subcellular location is the cell membrane. The enzyme catalyses L-seryl-[protein] + ATP = O-phospho-L-seryl-[protein] + ADP + H(+). It carries out the reaction L-threonyl-[protein] + ATP = O-phospho-L-threonyl-[protein] + ADP + H(+). The chain is Probable LRR receptor-like serine/threonine-protein kinase RKF3 (RKF3) from Arabidopsis thaliana (Mouse-ear cress).